A 25-amino-acid polypeptide reads, in one-letter code: Antimicrobial peptide scolopin-2 (25 aa).

In terms of tissue distribution, expressed by the venom gland.

It is found in the secreted. Functionally, antimicrobial peptide against both Gram-positive, -negative and yeast. Also induces histamine release by mast cells and shows moderate hemolytic activities against both human and rabbit red cells. In Scolopendra mutilans (Chinese red-headed centipede), this protein is Antimicrobial peptide scolopin-2.